A 1160-amino-acid chain; its full sequence is Protein GIGANTEA (1160 aa).

Residues 158–169 (CSSTSDQASSCE) show a composition bias toward polar residues. Disordered stretches follow at residues 158–188 (CSSTSDQASSCESMEKRANGSPRNEPDRKPL), 600–629 (GGSKRPTGSDNHSSEEVTNDSRLTNGRNRC), and 800–830 (PVKKDEPPIEEKNINSSDGGALEKKDASRSH). Basic and acidic residues predominate over residues 170–187 (SMEKRANGSPRNEPDRKP). Basic and acidic residues predominate over residues 801-812 (VKKDEPPIEEKN).

It belongs to the GIGANTEA family.

It is found in the nucleus. In terms of biological role, involved in regulation of circadian rhythm, and in the control of the photoperiodic flowering. Acts as a suppressor of flowering under short-day (SD) and long-day (LD) conditions. Activates Hd1/CONSTANS gene. The chain is Protein GIGANTEA (GI) from Oryza sativa subsp. japonica (Rice).